The chain runs to 341 residues: Nucleoid-associated protein Sden_2335 (341 aa).

The protein belongs to the YejK family.

It is found in the cytoplasm. Its subcellular location is the nucleoid. This Shewanella denitrificans (strain OS217 / ATCC BAA-1090 / DSM 15013) protein is Nucleoid-associated protein Sden_2335.